The sequence spans 215 residues: Pyrrolidone-carboxylate peptidase (215 aa).

Active-site residues include E80, C143, and H167.

This sequence belongs to the peptidase C15 family. In terms of assembly, homotetramer.

It is found in the cytoplasm. It carries out the reaction Release of an N-terminal pyroglutamyl group from a polypeptide, the second amino acid generally not being Pro.. In terms of biological role, removes 5-oxoproline from various penultimate amino acid residues except L-proline. The polypeptide is Pyrrolidone-carboxylate peptidase (Bacillus cereus (strain AH820)).